The sequence spans 517 residues: Maturase K (517 aa).

The protein belongs to the intron maturase 2 family. MatK subfamily.

The protein resides in the plastid. Its subcellular location is the chloroplast. Functionally, usually encoded in the trnK tRNA gene intron. Probably assists in splicing its own and other chloroplast group II introns. The polypeptide is Maturase K (Dracula chimaera).